The following is an 89-amino-acid chain: Probable Fe(2+)-trafficking protein (89 aa).

This sequence belongs to the Fe(2+)-trafficking protein family.

Its function is as follows. Could be a mediator in iron transactions between iron acquisition and iron-requiring processes, such as synthesis and/or repair of Fe-S clusters in biosynthetic enzymes. The protein is Probable Fe(2+)-trafficking protein of Hahella chejuensis (strain KCTC 2396).